Here is a 102-residue protein sequence, read N- to C-terminus: Malonate decarboxylase acyl carrier protein (102 aa).

Residue S27 is modified to O-(phosphoribosyl dephospho-coenzyme A)serine.

It belongs to the MdcC family. Post-translationally, covalently binds the prosthetic group of malonate decarboxylase.

It is found in the cytoplasm. Its function is as follows. Subunit of malonate decarboxylase, it is an acyl carrier protein to which acetyl and malonyl thioester residues are bound via a 2'-(5''-phosphoribosyl)-3'-dephospho-CoA prosthetic group and turn over during the catalytic mechanism. The polypeptide is Malonate decarboxylase acyl carrier protein (Acinetobacter calcoaceticus).